A 389-amino-acid polypeptide reads, in one-letter code: Phospho-N-acetylmuramoyl-pentapeptide-transferase (389 aa).

10 helical membrane passes run 25–45 (RAVM…PWVI), 73–93 (TMGG…WGDL), 97–117 (FIWI…VDDY), 135–155 (FWQS…VSEA), 190–210 (ISYP…IVGA), 222–242 (GLVI…AYVM), 258–278 (GAGE…AFLW), 286–306 (VFMG…VAVI), 311–331 (IVLF…MLQV), and 366–386 (QVVV…LTTL).

This sequence belongs to the glycosyltransferase 4 family. MraY subfamily. Requires Mg(2+) as cofactor.

Its subcellular location is the cell inner membrane. It carries out the reaction UDP-N-acetyl-alpha-D-muramoyl-L-alanyl-gamma-D-glutamyl-meso-2,6-diaminopimeloyl-D-alanyl-D-alanine + di-trans,octa-cis-undecaprenyl phosphate = di-trans,octa-cis-undecaprenyl diphospho-N-acetyl-alpha-D-muramoyl-L-alanyl-D-glutamyl-meso-2,6-diaminopimeloyl-D-alanyl-D-alanine + UMP. It participates in cell wall biogenesis; peptidoglycan biosynthesis. Functionally, catalyzes the initial step of the lipid cycle reactions in the biosynthesis of the cell wall peptidoglycan: transfers peptidoglycan precursor phospho-MurNAc-pentapeptide from UDP-MurNAc-pentapeptide onto the lipid carrier undecaprenyl phosphate, yielding undecaprenyl-pyrophosphoryl-MurNAc-pentapeptide, known as lipid I. This is Phospho-N-acetylmuramoyl-pentapeptide-transferase from Burkholderia cenocepacia (strain HI2424).